We begin with the raw amino-acid sequence, 294 residues long: Diphthine synthase (294 aa).

S-adenosyl-L-methionine is bound by residues D93, V96, 121–122, L173, and A220; that span reads SG.

The protein belongs to the diphthine synthase family. In terms of assembly, homodimer.

It catalyses the reaction 2-[(3S)-amino-3-carboxypropyl]-L-histidyl-[translation elongation factor 2] + 3 S-adenosyl-L-methionine = diphthine-[translation elongation factor 2] + 3 S-adenosyl-L-homocysteine + 3 H(+). Its pathway is protein modification; peptidyl-diphthamide biosynthesis. S-adenosyl-L-methionine-dependent methyltransferase that catalyzes the trimethylation of the amino group of the modified target histidine residue in translation elongation factor 2 (EF-2), to form an intermediate called diphthine. The three successive methylation reactions represent the second step of diphthamide biosynthesis. The sequence is that of Diphthine synthase (dphB) from Aeropyrum pernix (strain ATCC 700893 / DSM 11879 / JCM 9820 / NBRC 100138 / K1).